A 177-amino-acid polypeptide reads, in one-letter code: Nucleoside triphosphate/diphosphate phosphatase (177 aa).

R23 (proton donor) is an active-site residue. Mg(2+) contacts are provided by N87, D103, D105, D107, D120, and E123.

Belongs to the Ntdp family. Requires Mg(2+) as cofactor.

The catalysed reaction is a ribonucleoside 5'-triphosphate + H2O = a ribonucleoside 5'-diphosphate + phosphate + H(+). The enzyme catalyses a ribonucleoside 5'-diphosphate + H2O = a ribonucleoside 5'-phosphate + phosphate + H(+). In terms of biological role, has nucleoside phosphatase activity towards nucleoside triphosphates and nucleoside diphosphates. This is Nucleoside triphosphate/diphosphate phosphatase from Streptococcus uberis (strain ATCC BAA-854 / 0140J).